The sequence spans 146 residues: Ribonuclease H (146 aa).

One can recognise an RNase H type-1 domain in the interval 1–143 (MQKKIIVYTD…CDELARQAIK (143 aa)). Mg(2+) is bound by residues D10, E48, D70, and D135.

This sequence belongs to the RNase H family. Monomer. Requires Mg(2+) as cofactor.

It is found in the cytoplasm. The enzyme catalyses Endonucleolytic cleavage to 5'-phosphomonoester.. Endonuclease that specifically degrades the RNA of RNA-DNA hybrids. In Chlorobium phaeobacteroides (strain DSM 266 / SMG 266 / 2430), this protein is Ribonuclease H.